We begin with the raw amino-acid sequence, 138 residues long: Large ribosomal subunit protein bL17 (138 aa).

Belongs to the bacterial ribosomal protein bL17 family. Part of the 50S ribosomal subunit. Contacts protein L32.

The chain is Large ribosomal subunit protein bL17 from Methylorubrum extorquens (strain CM4 / NCIMB 13688) (Methylobacterium extorquens).